The sequence spans 155 residues: uncharacterized protein (155 aa).

2 disordered regions span residues 1 to 22 and 108 to 155; these read MSSQKGNVTRSRPQKHQNTFTF and PFNK…DTQA. An N-acetylserine modification is found at serine 2. A phosphoserine mark is found at serine 136, serine 144, and serine 146. A compositionally biased stretch (acidic residues) spans 136–155; sequence SDEDLDAESDSEGEDEDTQA.

This is an uncharacterized protein from Rattus norvegicus (Rat).